A 973-amino-acid polypeptide reads, in one-letter code: Vacuolar membrane protease (973 aa).

Topologically, residues 1-15 (MARQYSRTNPLGFTP) are cytoplasmic. The helical transmembrane segment at 16–36 (WPVTIITALVYLALVIPLLVV) threads the bilayer. Residues 37-383 (QHVVPSAPGS…STLAVFELHT (347 aa)) lie on the Vacuolar side of the membrane. Asn52 and Asn115 each carry an N-linked (GlcNAc...) asparagine glycan. His167 and Asp179 together coordinate Zn(2+). The Proton acceptor role is filled by Glu213. Positions 214, 239, and 312 each coordinate Zn(2+). Residues 384 to 404 (LFALSVTLLIVAPLVLLATSI) form a helical membrane-spanning segment. Topologically, residues 405 to 438 (ALVRADRMYLFRSTARVPGSDDFDEGVSLQGVRG) are cytoplasmic. The helical transmembrane segment at 439 to 459 (FFRFPFLLVIPTGVAVGLAYL) threads the bilayer. Topologically, residues 460 to 469 (VTKINPYIIH) are vacuolar. The helical transmembrane segment at 470–490 (SSEYAVWSMMISAWVFLAWFV) threads the bilayer. The Cytoplasmic portion of the chain corresponds to 491–504 (SRVADFARPSAFHR). The helical transmembrane segment at 505–525 (VYVLTWMFVAEWVLLVIATVY) threads the bilayer. Residues 526 to 529 (ENRY) lie on the Vacuolar side of the membrane. The chain crosses the membrane as a helical span at residues 530–550 (GLAGGYFVFFALSGTFLATWI). Residues 551–674 (SYLELFALPR…GLPKWTWVLQ (124 aa)) are Cytoplasmic-facing. The disordered stretch occupies residues 572–623 (SRYASNHGSRLGTSSGEHGMDDAEDEEDDDGDDEDEARNVEEEPTESTSLLR). Over residues 574–587 (YASNHGSRLGTSSG) the composition is skewed to polar residues. Acidic residues predominate over residues 593–607 (DAEDEEDDDGDDEDE). The helical transmembrane segment at 675–695 (FLLSAPIVLILVGPLALLLTA) threads the bilayer. Residues 696-708 (ALRQTAQDGSSPL) are Vacuolar-facing. The helical transmembrane segment at 709–729 (FVYIAIAVLTTLLVTPLLPFI) threads the bilayer. Topologically, residues 730-735 (HRYTHH) are cytoplasmic. Residues 736–756 (IPLFLLLVFTGTLIYNLVAFP) traverse the membrane as a helical segment. The Vacuolar portion of the chain corresponds to 757–973 (FSPSNRLKLF…LVEGSRRFEV (217 aa)). 2 N-linked (GlcNAc...) asparagine glycosylation sites follow: Asn803 and Asn839.

This sequence belongs to the peptidase M28 family. Zn(2+) serves as cofactor.

It localises to the vacuole membrane. May be involved in vacuolar sorting and osmoregulation. This Aspergillus clavatus (strain ATCC 1007 / CBS 513.65 / DSM 816 / NCTC 3887 / NRRL 1 / QM 1276 / 107) protein is Vacuolar membrane protease.